We begin with the raw amino-acid sequence, 509 residues long: Maturase K (509 aa).

Belongs to the intron maturase 2 family. MatK subfamily.

The protein resides in the plastid. It is found in the chloroplast. Functionally, usually encoded in the trnK tRNA gene intron. Probably assists in splicing its own and other chloroplast group II introns. The sequence is that of Maturase K from Nicotiana clevelandii (Wild tobacco).